We begin with the raw amino-acid sequence, 424 residues long: Serine--tRNA ligase (424 aa).

231-233 (TAE) is an L-serine binding site. 262–264 (RSE) is an ATP binding site. Glu285 lines the L-serine pocket. Position 349–352 (349–352 (EISS)) interacts with ATP. Ser385 provides a ligand contact to L-serine.

It belongs to the class-II aminoacyl-tRNA synthetase family. Type-1 seryl-tRNA synthetase subfamily. As to quaternary structure, homodimer. The tRNA molecule binds across the dimer.

It is found in the cytoplasm. The enzyme catalyses tRNA(Ser) + L-serine + ATP = L-seryl-tRNA(Ser) + AMP + diphosphate + H(+). It carries out the reaction tRNA(Sec) + L-serine + ATP = L-seryl-tRNA(Sec) + AMP + diphosphate + H(+). Its pathway is aminoacyl-tRNA biosynthesis; selenocysteinyl-tRNA(Sec) biosynthesis; L-seryl-tRNA(Sec) from L-serine and tRNA(Sec): step 1/1. Its function is as follows. Catalyzes the attachment of serine to tRNA(Ser). Is also able to aminoacylate tRNA(Sec) with serine, to form the misacylated tRNA L-seryl-tRNA(Sec), which will be further converted into selenocysteinyl-tRNA(Sec). This Bacillus cereus (strain G9842) protein is Serine--tRNA ligase.